A 229-amino-acid polypeptide reads, in one-letter code: Cytidylate kinase (229 aa).

12 to 20 (GPSGAGKGT) is an ATP binding site.

The protein belongs to the cytidylate kinase family. Type 1 subfamily.

The protein resides in the cytoplasm. It catalyses the reaction CMP + ATP = CDP + ADP. The enzyme catalyses dCMP + ATP = dCDP + ADP. The protein is Cytidylate kinase of Serratia proteamaculans (strain 568).